Consider the following 231-residue polypeptide: Large ribosomal subunit protein uL1 (231 aa).

The protein belongs to the universal ribosomal protein uL1 family. In terms of assembly, part of the 50S ribosomal subunit.

Binds directly to 23S rRNA. The L1 stalk is quite mobile in the ribosome, and is involved in E site tRNA release. In terms of biological role, protein L1 is also a translational repressor protein, it controls the translation of the L11 operon by binding to its mRNA. This is Large ribosomal subunit protein uL1 from Buchnera aphidicola subsp. Acyrthosiphon pisum (strain 5A).